A 214-amino-acid chain; its full sequence is tRNA (guanine-N(7)-)-methyltransferase (214 aa).

S-adenosyl-L-methionine contacts are provided by Glu44, Asp69, Asp96, and Asp118. Residue Asp118 is part of the active site. A substrate-binding site is contributed by Lys122. Positions 124–129 (KHEKRR) are interaction with RNA. Substrate-binding positions include Asp154 and 191-194 (TEYE).

The protein belongs to the class I-like SAM-binding methyltransferase superfamily. TrmB family.

It carries out the reaction guanosine(46) in tRNA + S-adenosyl-L-methionine = N(7)-methylguanosine(46) in tRNA + S-adenosyl-L-homocysteine. The protein operates within tRNA modification; N(7)-methylguanine-tRNA biosynthesis. Functionally, catalyzes the formation of N(7)-methylguanine at position 46 (m7G46) in tRNA. This chain is tRNA (guanine-N(7)-)-methyltransferase, found in Enterococcus faecalis (strain ATCC 700802 / V583).